The primary structure comprises 272 residues: Phosphate import ATP-binding protein PstB (272 aa).

In terms of domain architecture, ABC transporter spans Ile-26–Ile-267. Gly-58–Ser-65 lines the ATP pocket.

Belongs to the ABC transporter superfamily. Phosphate importer (TC 3.A.1.7) family. In terms of assembly, the complex is composed of two ATP-binding proteins (PstB), two transmembrane proteins (PstC and PstA) and a solute-binding protein (PstS).

Its subcellular location is the cell inner membrane. The enzyme catalyses phosphate(out) + ATP + H2O = ADP + 2 phosphate(in) + H(+). Part of the ABC transporter complex PstSACB involved in phosphate import. Responsible for energy coupling to the transport system. This Hydrogenovibrio crunogenus (strain DSM 25203 / XCL-2) (Thiomicrospira crunogena) protein is Phosphate import ATP-binding protein PstB.